An 81-amino-acid polypeptide reads, in one-letter code: Omega-conotoxin-like TxO4 (81 aa).

A signal peptide spans 1 to 22 (MKLTCVVIVAVLFLTAWTFVTA). A propeptide spanning residues 23-52 (VPHSSNALENLYLKARHEMENPEASKLNTR) is cleaved from the precursor. Disulfide bonds link cysteine 55–cysteine 72, cysteine 62–cysteine 76, and cysteine 71–cysteine 80. At proline 70 the chain carries 4-hydroxyproline; partial. Tryptophan 75 is modified (6'-bromotryptophan; partial).

Belongs to the conotoxin O1 superfamily. TxO4 is found with and without hydroxyproline and these two forms have a bromotryptophan. Truncated TxO4 is found with and without bromotryptophan, and these two forms have no hydroxyproline. Expressed by the venom duct.

It is found in the secreted. In terms of biological role, omega-conotoxins act at presynaptic membranes, they bind and block voltage-gated calcium channels (Cav). In Conus textile (Cloth-of-gold cone), this protein is Omega-conotoxin-like TxO4.